The sequence spans 689 residues: Glycine--tRNA ligase beta subunit (689 aa).

The protein belongs to the class-II aminoacyl-tRNA synthetase family. Tetramer of two alpha and two beta subunits.

It localises to the cytoplasm. It carries out the reaction tRNA(Gly) + glycine + ATP = glycyl-tRNA(Gly) + AMP + diphosphate. This chain is Glycine--tRNA ligase beta subunit, found in Salmonella heidelberg (strain SL476).